The sequence spans 393 residues: Homeobox protein knotted-1-like 4 (393 aa).

Residues 1 to 13 are compositionally biased toward polar residues; the sequence is MAFHNNHFNHFTD. Disordered regions lie at residues 1 to 39 and 81 to 114; these read MAFH…PPNW and QRGN…EKKE. The ELK domain maps to 286–306; the sequence is ELKHELKQGYKEKIVDIREEI. A DNA-binding region (homeobox; TALE-type) is located at residues 307–370; sequence LRKRRAGKLP…NQRKRNWHSN (64 aa). The segment at 363 to 393 is disordered; the sequence is RKRNWHSNPSSSTVSKNKRRSNAGENSGRDR. Residues 368-377 show a composition bias toward polar residues; the sequence is HSNPSSSTVS.

The protein belongs to the TALE/KNOX homeobox family. In terms of assembly, may form heterodimeric complex with the TALE/BELL proteins. Interacts with OFP1, OFP2, OFP4 and OFP12. Interacts with KNATM-B.

Its subcellular location is the nucleus. The sequence is that of Homeobox protein knotted-1-like 4 (KNAT4) from Arabidopsis thaliana (Mouse-ear cress).